Reading from the N-terminus, the 207-residue chain is Vascular endothelial growth factor B (207 aa).

The signal sequence occupies residues 1-21 (MSPLLRRLLLAALLQLAPAQA). Intrachain disulfides connect cysteine 47–cysteine 89, cysteine 78–cysteine 122, and cysteine 82–cysteine 124. Over residues 122–139 (CECRPKKKDSAVKPDRAA) the composition is skewed to basic and acidic residues. Residues 122 to 207 (CECRPKKKDS…AASSVAKGGA (86 aa)) form a disordered region. Low complexity predominate over residues 174 to 207 (PSAHAAPSTTSALTPGPAAAAADAAASSVAKGGA).

The protein belongs to the PDGF/VEGF growth factor family. In terms of assembly, homodimer; disulfide-linked. Can also form heterodimer with VEGF. Post-translationally, VEGF-B186 is O-glycosylated. As to expression, expressed in all tissues except liver. Highest levels found in heart, skeletal muscle and pancreas.

Its subcellular location is the secreted. Growth factor for endothelial cells. VEGF-B167 binds heparin and neuropilin-1 whereas the binding to neuropilin-1 of VEGF-B186 is regulated by proteolysis. The protein is Vascular endothelial growth factor B (VEGFB) of Homo sapiens (Human).